The following is a 125-amino-acid chain: Crustacean hyperglycemic hormones 5 (125 aa).

An N-terminal signal peptide occupies residues 1-34 (MKPGNTSFNMVSFRMVWTAMMATLLVAGASSAGT). 3 disulfides stabilise this stretch: cysteine 58-cysteine 94, cysteine 74-cysteine 90, and cysteine 77-cysteine 103. A Valine amide modification is found at valine 123.

The protein belongs to the arthropod CHH/MIH/GIH/VIH hormone family. In terms of tissue distribution, produced by the medulla terminalis X-organ in the eyestalks and transported to the sinus gland where they are stored and released.

The protein resides in the secreted. In terms of biological role, hormone found in the sinus gland of isopods and decapods which controls the blood sugar level. Has a secretagogue action over the amylase released from the midgut gland. May act as a stress hormone and may be involved in the control of molting and reproduction. This Penaeus japonicus (Kuruma prawn) protein is Crustacean hyperglycemic hormones 5.